The chain runs to 284 residues: Acetylglutamate kinase (284 aa).

Substrate is bound by residues 66–67 (GG), R88, and N179.

It belongs to the acetylglutamate kinase family. ArgB subfamily.

Its subcellular location is the cytoplasm. It carries out the reaction N-acetyl-L-glutamate + ATP = N-acetyl-L-glutamyl 5-phosphate + ADP. The protein operates within amino-acid biosynthesis; L-arginine biosynthesis; N(2)-acetyl-L-ornithine from L-glutamate: step 2/4. Its function is as follows. Catalyzes the ATP-dependent phosphorylation of N-acetyl-L-glutamate. In Actinobacillus pleuropneumoniae serotype 3 (strain JL03), this protein is Acetylglutamate kinase.